Consider the following 460-residue polypeptide: MTQLTMKDKIGYGLGDTACGFVWQATMFLLAYFYTDVFGLSAGIMGTLFLVSRVLDAVTDPLMGLLVDRTRTRHGQFRPFLLWGAIPFGIVCVLTFYTPDFSAQGKIIYACVTYILLTLVYTFVNVPYCAMPGVITADPKERHALQSWRFFLAAAGSLAISGIALPLVSIIGKGDEQVGYFGAMCVLGLSGVVLLYVCFFTTKERYTFEVQPGSSVAKDLKLLLGNSQWRIMCAFKMMATCSNVVRGGATLYFVKYVMDHPELATQFLLYGSLATMFGSLCSSRLLGRFDRVTAFKWIIVAYSLISLLIFVTPAEHIALIFALNILFLFVFNTTTPLQWLMASDVVDYEESRSGRRLDGLVFSTYLFSLKIGLAIGGAVVGWILAYVNYSASSSVQPVEVLTTIKILFCVVPVVLYAGMFIMLSLYKLTDARVEAISRQLIKHRAAQGEAVPDAATAASH.

Over 1–9 (MTQLTMKDK) the chain is Cytoplasmic. 2 consecutive transmembrane segments (helical) span residues 10–30 (IGYG…MFLL) and 31–51 (AYFY…LFLV). Topologically, residues 52 to 78 (SRVLDAVTDPLMGLLVDRTRTRHGQFR) are cytoplasmic. The helical transmembrane segment at 79 to 99 (PFLLWGAIPFGIVCVLTFYTP) threads the bilayer. Residues 100 to 106 (DFSAQGK) lie on the Periplasmic side of the membrane. Residues 107-127 (IIYACVTYILLTLVYTFVNVP) traverse the membrane as a helical segment. Topologically, residues 128–150 (YCAMPGVITADPKERHALQSWRF) are cytoplasmic. A helical transmembrane segment spans residues 151 to 171 (FLAAAGSLAISGIALPLVSII). Residues 172–179 (GKGDEQVG) are Periplasmic-facing. A helical transmembrane segment spans residues 180–200 (YFGAMCVLGLSGVVLLYVCFF). Topologically, residues 201–262 (TTKERYTFEV…FVKYVMDHPE (62 aa)) are cytoplasmic. Residues 263–283 (LATQFLLYGSLATMFGSLCSS) traverse the membrane as a helical segment. Topologically, residues 284-308 (RLLGRFDRVTAFKWIIVAYSLISLL) are periplasmic. A helical membrane pass occupies residues 309–329 (IFVTPAEHIALIFALNILFLF). Residues 330-366 (VFNTTTPLQWLMASDVVDYEESRSGRRLDGLVFSTYL) are Cytoplasmic-facing. Residues 367–387 (FSLKIGLAIGGAVVGWILAYV) form a helical membrane-spanning segment. Residues 388-405 (NYSASSSVQPVEVLTTIK) are Periplasmic-facing. A helical transmembrane segment spans residues 406 to 426 (ILFCVVPVVLYAGMFIMLSLY). At 427 to 460 (KLTDARVEAISRQLIKHRAAQGEAVPDAATAASH) the chain is on the cytoplasmic side.

It belongs to the sodium:galactoside symporter (TC 2.A.2) family.

The protein resides in the cell inner membrane. The sequence is that of Putative glycoside/cation symporter YagG (yagG) from Escherichia coli (strain K12).